The chain runs to 70 residues: U2-agatoxin-Ao1l (70 aa).

An N-terminal signal peptide occupies residues 1-20 (MRAIISLLLISAMVFSIIEA). Positions 21–34 (VPEEEGLQLSEDER) are excised as a propeptide. 3 disulfides stabilise this stretch: C37–C53, C44–C58, and C52–C68. L69 carries the post-translational modification Leucine amide.

It belongs to the neurotoxin 01 (U2-agtx) family. Expressed by the venom gland.

The protein resides in the secreted. In terms of biological role, insect active toxin causing rapid but reversible paralysis in crickets. No activity shown in mammals. Does not show effect on mammalian voltage-gated calcium channels. This chain is U2-agatoxin-Ao1l, found in Agelena orientalis (Funnel-web spider).